Here is a 367-residue protein sequence, read N- to C-terminus: Flagellar P-ring protein (367 aa).

The N-terminal stretch at 1 to 21 (MYVFKALAGIVLALVATLAHA) is a signal peptide.

The protein belongs to the FlgI family. In terms of assembly, the basal body constitutes a major portion of the flagellar organelle and consists of four rings (L,P,S, and M) mounted on a central rod.

It localises to the periplasm. The protein localises to the bacterial flagellum basal body. Assembles around the rod to form the L-ring and probably protects the motor/basal body from shearing forces during rotation. The polypeptide is Flagellar P-ring protein (Salmonella arizonae (strain ATCC BAA-731 / CDC346-86 / RSK2980)).